The following is an 85-amino-acid chain: Acyl carrier protein (85 aa).

Residues 4-79 (DELFEKVKEI…NAVNLLSEKL (76 aa)) form the Carrier domain. S39 bears the O-(pantetheine 4'-phosphoryl)serine mark.

It belongs to the acyl carrier protein (ACP) family. Post-translationally, 4'-phosphopantetheine is transferred from CoA to a specific serine of apo-ACP by AcpS. This modification is essential for activity because fatty acids are bound in thioester linkage to the sulfhydryl of the prosthetic group.

The protein localises to the cytoplasm. The protein operates within lipid metabolism; fatty acid biosynthesis. Carrier of the growing fatty acid chain in fatty acid biosynthesis. In Petrotoga mobilis (strain DSM 10674 / SJ95), this protein is Acyl carrier protein.